The chain runs to 130 residues: Small ribosomal subunit protein uS9 (130 aa).

The protein belongs to the universal ribosomal protein uS9 family.

The chain is Small ribosomal subunit protein uS9 from Burkholderia vietnamiensis (strain G4 / LMG 22486) (Burkholderia cepacia (strain R1808)).